The primary structure comprises 78 residues: MSRVCQVTGKGPVTGNNISHANNKTRRRFLPNLQHHRFWVESEKRFVRLRVSAKGMRVIDKRGIDVVLAELRARGEKV.

The segment at M1–H20 is disordered.

The protein belongs to the bacterial ribosomal protein bL28 family.

This Stutzerimonas stutzeri (strain A1501) (Pseudomonas stutzeri) protein is Large ribosomal subunit protein bL28.